The following is a 343-amino-acid chain: L-ornithine/L-arginine 3-hydroxylase (343 aa).

Residues histidine 147 and glutamate 149 each coordinate Fe cation. Residues 199-215 (MPDNSHLPQNTAESTGD) show a composition bias toward polar residues. The tract at residues 199 to 218 (MPDNSHLPQNTAESTGDPTK) is disordered. Histidine 302 lines the Fe cation pocket. Arginine 316 is a binding site for 2-oxoglutarate.

Belongs to the clavaminate synthase family. Fe(2+) serves as cofactor.

The catalysed reaction is L-ornithine + 2-oxoglutarate + O2 = (3S)-3-hydroxy-L-ornithine + succinate + CO2. It catalyses the reaction L-arginine + 2-oxoglutarate + O2 = (2S,3S)-hydroxyarginine + succinate + CO2. In terms of biological role, alpha-ketoglutarate-dependent dioxygenase that in vitro catalyzes the regio- and stereoselective hydroxylation of L-ornithine and L-arginine, leading to (3S)-3-hydroxy-L-ornithine and (3S)-3-hydroxy-L-arginine, respectively. Cannot use L-lysine, D-ornithine, or D-arginine as substrate. The polypeptide is L-ornithine/L-arginine 3-hydroxylase (Catenulispora acidiphila (strain DSM 44928 / JCM 14897 / NBRC 102108 / NRRL B-24433 / ID139908)).